A 552-amino-acid chain; its full sequence is Urocanate hydratase (552 aa).

NAD(+) is bound by residues 49 to 50 (GG), Q127, 173 to 175 (GMG), D193, 239 to 240 (NA), 260 to 264 (QTSAH), 270 to 271 (YI), and Y319. C407 is a catalytic residue. G489 contacts NAD(+).

The protein belongs to the urocanase family. Requires NAD(+) as cofactor.

It is found in the cytoplasm. It carries out the reaction 4-imidazolone-5-propanoate = trans-urocanate + H2O. Its pathway is amino-acid degradation; L-histidine degradation into L-glutamate; N-formimidoyl-L-glutamate from L-histidine: step 2/3. In terms of biological role, catalyzes the conversion of urocanate to 4-imidazolone-5-propionate. The chain is Urocanate hydratase from Bacillus cereus (strain G9842).